Reading from the N-terminus, the 164-residue chain is T-cell surface glycoprotein CD3 zeta chain (164 aa).

An N-terminal signal peptide occupies residues 1 to 21; the sequence is MKWKALFTAAILQAQLPITEA. Topologically, residues 22 to 30 are extracellular; the sequence is QSFGLLDPK. The helical transmembrane segment at 31 to 51 threads the bilayer; the sequence is LCYLLDGILFIYGVILTALFL. Residues 52–164 are Cytoplasmic-facing; that stretch reads RVKFSRSADA…ALHMQALPPR (113 aa). Phosphoserine is present on serine 58. 3 consecutive ITAM domains span residues 61–89, 100–128, and 131–159; these read APAY…LDKR, PQRR…EIGM, and ERRR…LHMQ. Phosphotyrosine occurs at positions 64, 72, 83, 111, 123, 142, and 153. The span at 83–96 shows a compositional bias: basic and acidic residues; the sequence is YDVLDKRRGRDPEM. A disordered region spans residues 83–111; that stretch reads YDVLDKRRGRDPEMGGKPQRRKNPQEGLY. The disordered stretch occupies residues 128–154; that stretch reads MKGERRRGKGHDGLYQGLSTATKDTYD.

The protein belongs to the CD3Z/FCER1G family. As to quaternary structure, the TCR-CD3 complex is composed of a CD3D/CD3E and a CD3G/CD3E heterodimers that preferentially associate with TCRalpha and TCRbeta, respectively, to form TCRalpha/CD3E/CD3G and TCRbeta/CD3G/CD3E trimers. In turn, the hexamer interacts with CD3Z homodimer to form the TCR-CD3 complex. Alternatively, TCRalpha and TCRbeta can be replaced by TCRgamma and TCRdelta. Interacts with SLA. Interacts with TRAT1. Interacts with DOCK2. Interacts with SLA2. Interacts with SHB. Interacts with ZAP70. Interacts (tyrosine phosphorylated) with SHC1 (via SH2 domain). Interacts with PTPRC. Interacts with CRK; this interaction regulates CD3Z phosphorylation. Interacts (on T cell side) with CD81, ICAM1 and CD9 at immunological synapses between antigen-presenting cells and T cells. Interacts with CD160. Interacts with LY6E. The signaling subunit of immunoglobulin gamma (IgG) Fc receptor complex. As a homodimer or a heterodimer with FCER1G, associates with the ligand binding subunit FCGR3A (via transmembrane domain); this interaction is a prerequisite for Fc receptor complex expression on the cell surface. Interacts with CD5. In terms of assembly, (Microbial infection) Interacts with HIV-1 Nef; this interaction up-regulates the expression of the Fas ligand (FASLG) at the cell surface. (Microbial infection) Interacts with HIV-2 Nef protein; this interaction induces down-regulation of cell surface TCR/CD3 complexes. Post-translationally, phosphorylated on Tyr residues after T-cell receptor triggering by LCK in association with CD4/CD8. CD3Z is expressed in normal lymphoid tissue and in peripheral blood mononuclear cells (PBMCs).

The protein resides in the cell membrane. Its function is as follows. Part of the TCR-CD3 complex present on T-lymphocyte cell surface that plays an essential role in adaptive immune response. When antigen presenting cells (APCs) activate T-cell receptor (TCR), TCR-mediated signals are transmitted across the cell membrane by the CD3 chains CD3D, CD3E, CD3G and CD3Z. All CD3 chains contain immunoreceptor tyrosine-based activation motifs (ITAMs) in their cytoplasmic domain. Upon TCR engagement, these motifs become phosphorylated by Src family protein tyrosine kinases LCK and FYN, resulting in the activation of downstream signaling pathways. CD3Z ITAMs phosphorylation creates multiple docking sites for the protein kinase ZAP70 leading to ZAP70 phosphorylation and its conversion into a catalytically active enzyme. Plays an important role in intrathymic T-cell differentiation. Additionally, participates in the activity-dependent synapse formation of retinal ganglion cells (RGCs) in both the retina and dorsal lateral geniculate nucleus (dLGN). The protein is T-cell surface glycoprotein CD3 zeta chain (CD247) of Homo sapiens (Human).